Here is a 200-residue protein sequence, read N- to C-terminus: Protein GrpE (200 aa).

2 stretches are compositionally biased toward acidic residues: residues 1–17 (MNEQPNEELQSEDEQFD) and 34–44 (AFAEAGEETRD). Positions 1–49 (MNEQPNEELQSEDEQFDPQETVSFEGETAANDEAFAEAGEETRDEEMTR) are disordered.

This sequence belongs to the GrpE family. As to quaternary structure, homodimer.

The protein localises to the cytoplasm. In terms of biological role, participates actively in the response to hyperosmotic and heat shock by preventing the aggregation of stress-denatured proteins, in association with DnaK and GrpE. It is the nucleotide exchange factor for DnaK and may function as a thermosensor. Unfolded proteins bind initially to DnaJ; upon interaction with the DnaJ-bound protein, DnaK hydrolyzes its bound ATP, resulting in the formation of a stable complex. GrpE releases ADP from DnaK; ATP binding to DnaK triggers the release of the substrate protein, thus completing the reaction cycle. Several rounds of ATP-dependent interactions between DnaJ, DnaK and GrpE are required for fully efficient folding. In Rhodopirellula baltica (strain DSM 10527 / NCIMB 13988 / SH1), this protein is Protein GrpE.